A 234-amino-acid chain; its full sequence is UDP-2,3-diacylglucosamine hydrolase (234 aa).

Residues Asp9, His11, Asp42, Asn80, and His115 each contribute to the Mn(2+) site. 80-81 (NR) contacts substrate. The substrate site is built by Asp123, Ser161, Lys165, Lys168, and His196. The Mn(2+) site is built by His196 and His198.

Belongs to the LpxH family. Requires Mn(2+) as cofactor.

The protein resides in the cell inner membrane. It catalyses the reaction UDP-2-N,3-O-bis[(3R)-3-hydroxytetradecanoyl]-alpha-D-glucosamine + H2O = 2-N,3-O-bis[(3R)-3-hydroxytetradecanoyl]-alpha-D-glucosaminyl 1-phosphate + UMP + 2 H(+). It functions in the pathway glycolipid biosynthesis; lipid IV(A) biosynthesis; lipid IV(A) from (3R)-3-hydroxytetradecanoyl-[acyl-carrier-protein] and UDP-N-acetyl-alpha-D-glucosamine: step 4/6. In terms of biological role, hydrolyzes the pyrophosphate bond of UDP-2,3-diacylglucosamine to yield 2,3-diacylglucosamine 1-phosphate (lipid X) and UMP by catalyzing the attack of water at the alpha-P atom. Involved in the biosynthesis of lipid A, a phosphorylated glycolipid that anchors the lipopolysaccharide to the outer membrane of the cell. The chain is UDP-2,3-diacylglucosamine hydrolase from Histophilus somni (strain 129Pt) (Haemophilus somnus).